Here is a 283-residue protein sequence, read N- to C-terminus: Zinc finger protein 691 (283 aa).

Residues 1-41 (MGSEKEQRPEAHLPEEGEGAKPWRVDGSKDSQITPREDHGQ) show a composition bias toward basic and acidic residues. Positions 1–68 (MGSEKEQRPE…KVTAQAGGPG (68 aa)) are disordered. Ser43 is subject to Phosphoserine. Residue Lys81 forms a Glycyl lysine isopeptide (Lys-Gly) (interchain with G-Cter in SUMO2) linkage. C2H2-type zinc fingers lie at residues 83–105 (FICA…QRIH), 111–133 (YKCS…ERIH), 139–161 (YQCA…QQDH), 167–189 (YRCD…HRTH), 195–217 (YICC…HRTH), 223–245 (YECT…QRTH), and 251–273 (YRCT…QKTH).

It belongs to the krueppel C2H2-type zinc-finger protein family.

Its subcellular location is the nucleus. Its function is as follows. May be involved in transcriptional regulation. The sequence is that of Zinc finger protein 691 (Znf691) from Mus musculus (Mouse).